The following is a 141-amino-acid chain: Hemoglobin subunit alpha (141 aa).

Residues 1–141 enclose the Globin domain; it reads VLSGDDKSNL…VSTVLTSKYR (141 aa). S3 is subject to Phosphoserine. N6-succinyllysine occurs at positions 7 and 11. K16 bears the N6-acetyllysine; alternate mark. N6-succinyllysine; alternate is present on K16. A Phosphotyrosine modification is found at Y24. The residue at position 40 (K40) is an N6-succinyllysine. Phosphoserine is present on S49. An O2-binding site is contributed by H58. Residue H87 participates in heme b binding. Phosphoserine is present on S102. Phosphothreonine is present on T108. Phosphoserine is present on residues S124 and S131. Phosphothreonine occurs at positions 134 and 137. A Phosphoserine modification is found at S138.

Belongs to the globin family. Heterotetramer of two alpha chains and two beta chains. Red blood cells.

Functionally, involved in oxygen transport from the lung to the various peripheral tissues. This Microtus pennsylvanicus (Meadow vole) protein is Hemoglobin subunit alpha.